We begin with the raw amino-acid sequence, 340 residues long: MNGSVLPSRGRVTINQVAEAAGVSKASVSRYIGGDRQLLADATARRIERAIDQLDYRPNQMARGLKRGRTRLIGMLVADILNPYSVAVMHGVETACREHGYSLVVCNTDRDDEQERHHLAALQSYNVEGLIVNTLGHHPGELRALHRELPMVLVDRQLAELDTDLVGLDNADAVEQALDHLQHRGFRDILLVTEPLDGTSSRIERVQAFNASIGRRPALKGQVLQTDDFFRDGLRAFLSASGPGPKALFTCNGVATLCATRQLRDLGCRLFDEVGLLALDELDWYPLVGSGITALAQPTDEIGRTAFERLLARLEGDREPARRVTFPAQLIVRGSTHPRG.

The 56-residue stretch at 12-67 (VTINQVAEAAGVSKASVSRYIGGDRQLLADATARRIERAIDQLDYRPNQMARGLKR) folds into the HTH lacI-type domain. Positions 14–33 (INQVAEAAGVSKASVSRYIG) form a DNA-binding region, H-T-H motif.

Interacts with PtxR in the absence of 2-ketogluconate. Binding of the 2-ketogluconate effector to PtxS causes PtxS/PtxR complex dissociation.

2-ketogluconate acts as a molecular effector and causes dissociation of the PtxS/PtxR complex. In terms of biological role, negatively regulates glucose metabolism by binding directly to the promoter region of the kgu and gad operons. It also negatively regulates its own synthesis. In addition, in pathogenic strains, PtxS modulates PtxR activity in response to 2-ketogluconate. In the presence of PtxR, which also binds to the kgu and gad promoter regions, PtxS and PtxR form a tight complex, creating a DNA-loop that prevents RNA polymerase promoter access and expression of the glucose metabolism genes. Binding of the 2-ketogluconate effector to PtxS causes PtxS/PtxR complex dissociation and leads to the dissolution of the repression DNA-loop, facilitating the entry of the RNA polymerase and enabling the transcription of the genes. Also plays an important role in the regulation of the expression of the virulence factor exotoxin A (toxA). PtxS does not bind directly to the toxA promoter but negatively regulates the production of exotoxin A by binding to PtxR and interfering with its positive regulator activity. In the presence of 2-ketogluconate, PtxS is released and PtxR can recruit RNA polymerase. This chain is HTH-type transcriptional regulator PtxS, found in Pseudomonas aeruginosa (strain ATCC 15692 / DSM 22644 / CIP 104116 / JCM 14847 / LMG 12228 / 1C / PRS 101 / PAO1).